The chain runs to 198 residues: RNA-free ribonuclease P (198 aa).

This sequence belongs to the HARP family.

It carries out the reaction Endonucleolytic cleavage of RNA, removing 5'-extranucleotides from tRNA precursor.. In terms of biological role, RNA-free RNase P that catalyzes the removal of the 5'-leader sequence from pre-tRNA to produce the mature 5'-terminus. The sequence is that of RNA-free ribonuclease P from Thermococcus kodakarensis (strain ATCC BAA-918 / JCM 12380 / KOD1) (Pyrococcus kodakaraensis (strain KOD1)).